The sequence spans 539 residues: Eukaryotic translation initiation factor 3 subunit L (539 aa).

Positions threonine 306–histidine 514 constitute a PCI domain.

It belongs to the eIF-3 subunit L family. As to quaternary structure, component of the eukaryotic translation initiation factor 3 (eIF-3) complex. The eIF-3 complex interacts with pix.

The protein resides in the cytoplasm. Functionally, component of the eukaryotic translation initiation factor 3 (eIF-3) complex, which is involved in protein synthesis of a specialized repertoire of mRNAs and, together with other initiation factors, stimulates binding of mRNA and methionyl-tRNAi to the 40S ribosome. The eIF-3 complex specifically targets and initiates translation of a subset of mRNAs involved in cell proliferation. In Drosophila sechellia (Fruit fly), this protein is Eukaryotic translation initiation factor 3 subunit L.